Reading from the N-terminus, the 387-residue chain is Phosphoglycerate kinase (387 aa).

Residues 21–23 (DLN), Arg-36, 59–62 (HLGR), Arg-113, and Arg-146 contribute to the substrate site. ATP-binding positions include Lys-197, Glu-314, and 340–343 (GGDT).

The protein belongs to the phosphoglycerate kinase family. In terms of assembly, monomer.

It localises to the cytoplasm. It catalyses the reaction (2R)-3-phosphoglycerate + ATP = (2R)-3-phospho-glyceroyl phosphate + ADP. The protein operates within carbohydrate degradation; glycolysis; pyruvate from D-glyceraldehyde 3-phosphate: step 2/5. The polypeptide is Phosphoglycerate kinase (Pseudomonas putida (strain W619)).